The chain runs to 612 residues: T-cell immunomodulatory protein (612 aa).

An N-terminal signal peptide occupies residues 1 to 33; it reads MAAAGRLPSSWALFSPLLAGLALLGVGPVPARA. 9 N-linked (GlcNAc...) asparagine glycosylation sites follow: N36, N95, N139, N146, N151, N176, N188, N226, and N243. Residues 258 to 293 form an FG-GAP; atypical repeat; it reads VVGQSAFADFDGDGHMDHLLPGCEDKNCQKSTIYLV. 3 N-linked (GlcNAc...) asparagine glycosylation sites follow: N353, N371, and N482. A helical membrane pass occupies residues 567–587; it reads VLLTAIALIGVCVFILAIIGI.

It belongs to the TIP family. In terms of assembly, interacts with RUVBL1, RUVBL2 and alpha-tubulin. Ubiquitously expressed.

The protein localises to the secreted. It localises to the membrane. In terms of biological role, modulator of T-cell function. Has a protective effect in graft versus host disease model. The polypeptide is T-cell immunomodulatory protein (Homo sapiens (Human)).